Consider the following 269-residue polypeptide: Probable cysteine protease avirulence protein AvrPpiC2 (269 aa).

The tract at residues Met1–Arg39 is disordered. A compositionally biased stretch (polar residues) spans Ser13 to Asn27. Active-site residues include Cys72, His213, and Asp230.

It belongs to the peptidase C58 family.

In terms of biological role, potential cysteine protease. Avirulence protein, which may be essential during infection of plant cells from Pea and some Arabidopsis thaliana cultivars. May act by affecting the plant defense system. In plants lacking appropriate resistance (R) gene, it probably impairs the plant defense system and leads to the bacteria multiplication. In contrast, in plants containing the appropriate R protein, it is unable to induce disease symptoms, explaining its avirulence name. The chain is Probable cysteine protease avirulence protein AvrPpiC2 (avrPpiC2) from Pseudomonas syringae pv. pisi.